Reading from the N-terminus, the 89-residue chain is Small ribosomal subunit protein uS15 (89 aa).

It belongs to the universal ribosomal protein uS15 family. In terms of assembly, part of the 30S ribosomal subunit. Forms a bridge to the 50S subunit in the 70S ribosome, contacting the 23S rRNA.

One of the primary rRNA binding proteins, it binds directly to 16S rRNA where it helps nucleate assembly of the platform of the 30S subunit by binding and bridging several RNA helices of the 16S rRNA. In terms of biological role, forms an intersubunit bridge (bridge B4) with the 23S rRNA of the 50S subunit in the ribosome. The sequence is that of Small ribosomal subunit protein uS15 from Aliivibrio fischeri (strain ATCC 700601 / ES114) (Vibrio fischeri).